A 367-amino-acid polypeptide reads, in one-letter code: Anhydro-N-acetylmuramic acid kinase (367 aa).

Position 11–18 (11–18) interacts with ATP; the sequence is GTSLDGVD.

The protein belongs to the anhydro-N-acetylmuramic acid kinase family.

The catalysed reaction is 1,6-anhydro-N-acetyl-beta-muramate + ATP + H2O = N-acetyl-D-muramate 6-phosphate + ADP + H(+). It participates in amino-sugar metabolism; 1,6-anhydro-N-acetylmuramate degradation. It functions in the pathway cell wall biogenesis; peptidoglycan recycling. Catalyzes the specific phosphorylation of 1,6-anhydro-N-acetylmuramic acid (anhMurNAc) with the simultaneous cleavage of the 1,6-anhydro ring, generating MurNAc-6-P. Is required for the utilization of anhMurNAc either imported from the medium or derived from its own cell wall murein, and thus plays a role in cell wall recycling. The sequence is that of Anhydro-N-acetylmuramic acid kinase from Bradyrhizobium diazoefficiens (strain JCM 10833 / BCRC 13528 / IAM 13628 / NBRC 14792 / USDA 110).